Here is a 428-residue protein sequence, read N- to C-terminus: Serine--tRNA ligase (428 aa).

235-237 serves as a coordination point for L-serine; it reads TAE. 266–268 lines the ATP pocket; it reads RSE. Glu289 provides a ligand contact to L-serine. ATP is bound at residue 353 to 356; the sequence is EISS. Ser389 is an L-serine binding site.

It belongs to the class-II aminoacyl-tRNA synthetase family. Type-1 seryl-tRNA synthetase subfamily. As to quaternary structure, homodimer. The tRNA molecule binds across the dimer.

The protein localises to the cytoplasm. It catalyses the reaction tRNA(Ser) + L-serine + ATP = L-seryl-tRNA(Ser) + AMP + diphosphate + H(+). It carries out the reaction tRNA(Sec) + L-serine + ATP = L-seryl-tRNA(Sec) + AMP + diphosphate + H(+). Its pathway is aminoacyl-tRNA biosynthesis; selenocysteinyl-tRNA(Sec) biosynthesis; L-seryl-tRNA(Sec) from L-serine and tRNA(Sec): step 1/1. Catalyzes the attachment of serine to tRNA(Ser). Is also able to aminoacylate tRNA(Sec) with serine, to form the misacylated tRNA L-seryl-tRNA(Sec), which will be further converted into selenocysteinyl-tRNA(Sec). This is Serine--tRNA ligase from Shewanella denitrificans (strain OS217 / ATCC BAA-1090 / DSM 15013).